A 328-amino-acid chain; its full sequence is L-serine dehydratase/L-threonine deaminase (328 aa).

An N6-(pyridoxal phosphate)lysine modification is found at Lys41. Pro128 is a pyridoxal 5'-phosphate binding site.

Belongs to the serine/threonine dehydratase family. In terms of assembly, homodimer. Requires pyridoxal 5'-phosphate as cofactor. Predominantly expressed in the perivenous regions of the liver.

Its subcellular location is the cytoplasm. It carries out the reaction L-serine = pyruvate + NH4(+). It catalyses the reaction L-threonine = 2-oxobutanoate + NH4(+). It functions in the pathway carbohydrate biosynthesis; gluconeogenesis. Functionally, catalyzes the pyridoxal-phosphate-dependent dehydrative deamination of L-threonine and L-serine to ammonia and alpha-ketobutyrate and pyruvate, respectively. This chain is L-serine dehydratase/L-threonine deaminase (SDS), found in Homo sapiens (Human).